The following is a 270-amino-acid chain: UPF0354 protein BCA_4815 (270 aa).

Belongs to the UPF0354 family.

This is UPF0354 protein BCA_4815 from Bacillus cereus (strain 03BB102).